A 250-amino-acid polypeptide reads, in one-letter code: Myelin basic protein (250 aa).

Basic and acidic residues predominate over residues 1–28 (MGNHSGKRELSAEKASKDGEIHRGEAGK). Residues 1–150 (MGNHSGKREL…SQRSKYLATA (150 aa)) form a disordered region. Gly2 carries the post-translational modification N-acetylalanine. Ser31 and Ser40 each carry phosphoserine. The span at 95–113 (FSRDAPGREDNTFKDRPSE) shows a compositional bias: basic and acidic residues. Ser96 bears the Phosphothreonine mark. Glu113 bears the Phosphoserine mark. Glu122 is subject to Phosphothreonine. The residue at position 125 (Thr125) is a Phosphotyrosine. 4 positions are modified to phosphoserine: Ala135, Arg139, Ser141, and Ser144. A phosphotyrosine mark is found at Tyr146 and Leu147. Residue Thr149 is modified to Phosphothreonine. Ser151 carries the phosphoserine modification. Ser151 is modified (phosphotyrosine). At Thr152 the chain carries Phosphothreonine. Arg157 and Arg163 each carry citrulline. Residue Thr167 is modified to Phosphothreonine. Ser172 carries the phosphoserine modification. Residues Arg175 and Arg181 each carry the omega-N-methylarginine modification. The interval 175–250 (RFFSGDRGAP…SRSGSPMARR (76 aa)) is disordered. Ser188 carries the post-translational modification Phosphoserine. The residue at position 197 (Thr197) is a Phosphothreonine. Positions 197–206 (THYGSLPQKS) are enriched in polar residues. Tyr199 carries the post-translational modification Phosphotyrosine. Ser206 carries the phosphoserine modification. Phosphothreonine is present on residues Thr211, Thr226, and Thr229. Position 234 is a deamidated glutamine (Gln234). Position 239 is a citrulline (Arg239). Ser241 carries the phosphoserine modification. The residue at position 245 (Ser245) is a Phosphoserine; by UHMK1. Residue Arg250 is modified to Citrulline.

The protein belongs to the myelin basic protein family. Homodimer. As in other animals, several charge isomers may be produced as a result of optional post-translational modifications, such as phosphorylation of serine or threonine residues, deamidation of glutamine or asparagine residues, citrullination and methylation of arginine residues. Post-translationally, methylated on arginine residues; decreases with the age of the animal, making MBP more cationic. In terms of processing, phosphorylated by TAOK2, VRK2, MAPK11, MAPK12, MAPK14 and MINK1. Proteolytically cleaved in B cell lysosomes by cathepsin CTSG which degrades the major immunogenic MBP epitope and prevents the activation of MBP-specific autoreactive T cells. In terms of tissue distribution, in the embryo, isoform 1-isoform 3 are found in neurons within the central nervous system (primarily in pioneer neurons important in the formation of the cortex) and the peripheral nervous system. They are also expressed in the thymus, gut, lung and kidney. In the adult, isoform 1-isoform 3 are highly expressed in the brain (mainly in brain regions rich in oligodendrocytes) and spleen. Lower levels are seen in the heart, kidney and lung. Isoform 2 is also found in cells of the immune system. The isoforms missing the 134 first amino acids (isoform 4-isoform 13) are almost exclusively produced in the myelin-forming cells, the mature oligodendrocytes.

Its subcellular location is the myelin membrane. It localises to the cytoplasm. The protein resides in the nucleus. Functionally, the classic group of MBP isoforms (isoform 4-isoform 13) are with PLP the most abundant protein components of the myelin membrane in the CNS. They have a role in both its formation and stabilization. The non-classic group of MBP isoforms (isoform 1-isoform 3/Golli-MBPs) may preferentially have a role in the early developing brain long before myelination, maybe as components of transcriptional complexes, and may also be involved in signaling pathways in T-cells and neural cells. Differential splicing events combined to optional post-translational modifications give a wide spectrum of isomers, with each of them potentially having a specialized function. The polypeptide is Myelin basic protein (Mbp) (Mus musculus (Mouse)).